The following is a 349-amino-acid chain: Thiamine thiazole synthase, chloroplastic (349 aa).

The N-terminal 45 residues, 1–45 (MAAIASTLSLSSTKPQRLFDSSFHGSAISAAPISIGLKPRSFSVR), are a transit peptide targeting the chloroplast. Residues Ala-94, 114–115 (EQ), Gly-122, and Ala-187 contribute to the substrate site. Cys-216 carries the post-translational modification 2,3-didehydroalanine (Cys). Substrate contacts are provided by residues Asp-218, His-233, Met-285, and 295 to 297 (RMG).

It belongs to the THI4 family. Homooctamer. Interacts with RBCX1 and RBCX1. Interacts with CPK33. Requires Fe cation as cofactor. Post-translationally, during the catalytic reaction, a sulfide is transferred from Cys-216 to a reaction intermediate, generating a dehydroalanine residue. Not phosphorylated in vitro by CPK33. In terms of tissue distribution, expressed at high levels in chloroplast-containing parenchymatic cells of leaves, inflorescence shoots and flowers, and at lower levels in the vascular system. In young plants, detected in roots and shoots including cotyledons, leaves and hypocotyls. Also observed in apical meristematic regions, siliques and embryos. Low expression in roots, limited to the vascular tissue. Broadly expressed in roots, cotyledons, leaves, hypocotyls, inflorescences, siliques, and strongly in guard cells.

It localises to the plastid. It is found in the chloroplast. Its subcellular location is the mitochondrion. The protein resides in the cell membrane. It carries out the reaction [ADP-thiazole synthase]-L-cysteine + glycine + NAD(+) = [ADP-thiazole synthase]-dehydroalanine + ADP-5-ethyl-4-methylthiazole-2-carboxylate + nicotinamide + 3 H2O + 2 H(+). Functionally, involved in biosynthesis of the thiamine precursor thiazole. Catalyzes the conversion of NAD and glycine to adenosine diphosphate 5-(2-hydroxyethyl)-4-methylthiazole-2-carboxylic acid (ADT), an adenylated thiazole intermediate. The reaction includes an iron-dependent sulfide transfer from a conserved cysteine residue of the protein to a thiazole intermediate. The enzyme can only undergo a single turnover, which suggests it is a suicide enzyme. May have additional roles in adaptation to various stress conditions and in DNA damage tolerance. Acts as a positive regulator for the abscisic acid-induced activation of slow type anion channels during stomatal closure by repressing CPK33 kinase activity. This chain is Thiamine thiazole synthase, chloroplastic, found in Arabidopsis thaliana (Mouse-ear cress).